A 293-amino-acid polypeptide reads, in one-letter code: Elongation factor Ts (293 aa).

The segment at 80 to 83 (TDFV) is involved in Mg(2+) ion dislocation from EF-Tu.

The protein belongs to the EF-Ts family.

The protein resides in the cytoplasm. Its function is as follows. Associates with the EF-Tu.GDP complex and induces the exchange of GDP to GTP. It remains bound to the aminoacyl-tRNA.EF-Tu.GTP complex up to the GTP hydrolysis stage on the ribosome. This chain is Elongation factor Ts, found in Janthinobacterium sp. (strain Marseille) (Minibacterium massiliensis).